The sequence spans 289 residues: Phytoene synthase (289 aa).

Belongs to the phytoene/squalene synthase family. Requires ATP as cofactor. It depends on Mn(2+) as a cofactor. The cofactor is Mg(2+).

Its pathway is carotenoid biosynthesis; phytoene biosynthesis. Involved in the biosynthesis of carotenoids. Catalyzes the condensation of two molecules of geranylgeranyl diphosphate (GGPP) to give prephytoene diphosphate (PPPP) and the subsequent rearrangement of the cyclopropylcarbinyl intermediate to yield phytoene. This chain is Phytoene synthase (crtB), found in Thermus thermophilus (strain ATCC BAA-163 / DSM 7039 / HB27).